The primary structure comprises 76 residues: Translation initiation factor IF-1 (76 aa).

Residues M1–K76 form the S1-like domain.

Belongs to the IF-1 family. In terms of assembly, component of the 30S ribosomal translation pre-initiation complex which assembles on the 30S ribosome in the order IF-2 and IF-3, IF-1 and N-formylmethionyl-tRNA(fMet); mRNA recruitment can occur at any time during PIC assembly.

It localises to the cytoplasm. Its function is as follows. One of the essential components for the initiation of protein synthesis. Stabilizes the binding of IF-2 and IF-3 on the 30S subunit to which N-formylmethionyl-tRNA(fMet) subsequently binds. Helps modulate mRNA selection, yielding the 30S pre-initiation complex (PIC). Upon addition of the 50S ribosomal subunit IF-1, IF-2 and IF-3 are released leaving the mature 70S translation initiation complex. In Renibacterium salmoninarum (strain ATCC 33209 / DSM 20767 / JCM 11484 / NBRC 15589 / NCIMB 2235), this protein is Translation initiation factor IF-1.